Here is a 304-residue protein sequence, read N- to C-terminus: Acetyl-coenzyme A carboxylase carboxyl transferase subunit beta (304 aa).

The CoA carboxyltransferase N-terminal domain occupies 23-292 (VWTKCDSCGQ…PNPDAPREGV (270 aa)). 4 residues coordinate Zn(2+): cysteine 27, cysteine 30, cysteine 46, and cysteine 49. The C4-type zinc finger occupies 27 to 49 (CDSCGQVLYRAELERNLEVCPKC). Residues 283-304 (PNPDAPREGVVVPPAPDQESEA) form a disordered region.

The protein belongs to the AccD/PCCB family. As to quaternary structure, acetyl-CoA carboxylase is a heterohexamer composed of biotin carboxyl carrier protein (AccB), biotin carboxylase (AccC) and two subunits each of ACCase subunit alpha (AccA) and ACCase subunit beta (AccD). The cofactor is Zn(2+).

The protein resides in the cytoplasm. It catalyses the reaction N(6)-carboxybiotinyl-L-lysyl-[protein] + acetyl-CoA = N(6)-biotinyl-L-lysyl-[protein] + malonyl-CoA. Its pathway is lipid metabolism; malonyl-CoA biosynthesis; malonyl-CoA from acetyl-CoA: step 1/1. Component of the acetyl coenzyme A carboxylase (ACC) complex. Biotin carboxylase (BC) catalyzes the carboxylation of biotin on its carrier protein (BCCP) and then the CO(2) group is transferred by the transcarboxylase to acetyl-CoA to form malonyl-CoA. This is Acetyl-coenzyme A carboxylase carboxyl transferase subunit beta from Salmonella agona (strain SL483).